Reading from the N-terminus, the 1150-residue chain is GPI inositol-deacylase (1150 aa).

Positions 1-43 are disordered; the sequence is MQGRPNGASGDPNPRNDTSVTIDSDSDNGSRHRIAEVRGSSPS. N-linked (GlcNAc...) asparagine glycosylation is found at Asn-16 and Asn-28. The chain crosses the membrane as a helical span at residues 122-142; sequence ICSGLVLFVTVSALLILSIIV. Ser-309 is an active-site residue. The helical transmembrane segment at 790–810 threads the bilayer; it reads LAMRYRTVFAAFPLLVVSLVL. Asn-818 carries an N-linked (GlcNAc...) asparagine glycan. Residues 829–849 form a helical membrane-spanning segment; sequence ALDLCIRSSIPLLFLGLTFLA. A glycan (N-linked (GlcNAc...) asparagine) is linked at Asn-870. The helical transmembrane segment at 890–910 threads the bilayer; the sequence is AFFWFLVPLFGIISIGTCVIV. Asn-942 carries an N-linked (GlcNAc...) asparagine glycan. The next 5 membrane-spanning stretches (helical) occupy residues 960–980, 1010–1030, 1047–1067, 1079–1099, and 1102–1122; these read VLLLFVATFIPYQFAYVVACV, SIFILMIWILPINVLVLIVWI, VFSILPFMLLVETLTCGTMIP, VLFFFLAAYSAIYGVTYAYLL, and ITNLVIAWLVGIHFFAGGFSL. Asn-1124 and Asn-1130 each carry an N-linked (GlcNAc...) asparagine glycan.

The protein belongs to the GPI inositol-deacylase family.

The protein resides in the endoplasmic reticulum membrane. Its function is as follows. Involved in inositol deacylation of GPI-anchored proteins which plays important roles in the quality control and ER-associated degradation of GPI-anchored proteins. This is GPI inositol-deacylase (BST1) from Coccidioides immitis (strain RS) (Valley fever fungus).